A 1012-amino-acid chain; its full sequence is Ankyrin repeat- and BTB/POZ domain-containing protein 3-B (1012 aa).

Residues 160 to 180 (ILSWTISVNCIAASLSALSMY) form a helical membrane-spanning segment. ANK repeat units lie at residues 511–540 (QGMT…DINS), 557–586 (RQAT…NVEG), and 595–624 (YTET…DPMI). Residues 831 to 897 (SDVTFLVEGK…LYCGGTDALH (67 aa)) enclose the BTB domain.

The protein localises to the membrane. The chain is Ankyrin repeat- and BTB/POZ domain-containing protein 3-B (abtb3b) from Danio rerio (Zebrafish).